Here is a 497-residue protein sequence, read N- to C-terminus: Glycerol kinase (497 aa).

T13 contacts ADP. ATP-binding residues include T13, T14, and S15. T13 contacts sn-glycerol 3-phosphate. An ADP-binding site is contributed by R17. Sn-glycerol 3-phosphate contacts are provided by R83, E84, and Y135. Glycerol is bound by residues R83, E84, and Y135. H231 is subject to Phosphohistidine; by HPr. Residue D245 participates in sn-glycerol 3-phosphate binding. Glycerol contacts are provided by D245 and Q246. ADP contacts are provided by T267 and G310. The ATP site is built by T267, G310, Q314, and G411. Positions 411 and 415 each coordinate ADP.

Belongs to the FGGY kinase family. In terms of assembly, homotetramer and homodimer (in equilibrium). Post-translationally, the phosphoenolpyruvate-dependent sugar phosphotransferase system (PTS), including enzyme I, and histidine-containing protein (HPr) are required for the phosphorylation, which leads to the activation of the enzyme.

It catalyses the reaction glycerol + ATP = sn-glycerol 3-phosphate + ADP + H(+). Its pathway is polyol metabolism; glycerol degradation via glycerol kinase pathway; sn-glycerol 3-phosphate from glycerol: step 1/1. Activated by phosphorylation and inhibited by fructose 1,6-bisphosphate (FBP). In terms of biological role, key enzyme in the regulation of glycerol uptake and metabolism. Catalyzes the phosphorylation of glycerol to yield sn-glycerol 3-phosphate. This chain is Glycerol kinase, found in Listeria innocua serovar 6a (strain ATCC BAA-680 / CLIP 11262).